The sequence spans 867 residues: Dynamin-1 (867 aa).

The 267-residue stretch at D28–P294 folds into the Dynamin-type G domain. The segment at G38–S45 is G1 motif. The GDP site is built by S41, G43, K44, S45, S46, R59, and G60. The interval V64–R66 is G2 motif. A Phosphotyrosine modification is found at Y80. Y125 is subject to 3'-nitrotyrosine; alternate. Y125 bears the Phosphotyrosine; alternate mark. Residues D136–G139 form a G3 motif region. Positions T205–D208 are G4 motif. GDP contacts are provided by K206, D208, D211, N236, R237, and Q239. The interval V235–S238 is G5 motif. 2 positions are modified to phosphoserine: S306 and S347. Position 354 is a phosphotyrosine (Y354). Residue S512 is modified to Phosphoserine. The PH domain occupies Q515–V625. The GED domain occupies V659–V750. The disordered stretch occupies residues S767–L867. Phosphoserine occurs at positions 774 and 778. R796 is subject to Omega-N-methylarginine. S822 carries the phosphoserine modification. The segment covering P825 to V843 has biased composition (pro residues). 3 positions are modified to phosphoserine: G847, L851, and K857. Basic and acidic residues predominate over residues G856–L867.

This sequence belongs to the TRAFAC class dynamin-like GTPase superfamily. Dynamin/Fzo/YdjA family. Homodimer; homodimerization is mediated by the dynamin-type G domain which promotes assembly-stimulated GTPase activity. Homo-tetramer formed from two dimers in the absence of lipid. Oligomerizes into a helical polymer that self-assembles around the vesicle membrane, when associated to the menbrane through lipid binding. Interacts (via C-terminal proline-rich domain (PRD)) with SNX9 (via SH3 domain); this interaction allows regulation of DNM1 self-assembly during late stages of endocytic vesicle formation and supports DNM1's early functions in accelerating clathrin-coated pits (CCPs) maturation in non neuronals cell. Interacts (via C-terminal proline-rich domain (PRD)) with MYO1E (via SH3 domain); this interaction regulates receptor-mediated endocytosis. Interacts with SNX33 (via SH3 domain); this interaction decreases DNM1-dependent endocytosis. Interacts with DIAPH1. Interacts with GRB2 (via SH3 domain); this interaction mediates disassembly of DNM1 polymers, therefore modulates self-assembly. Forms a complex with BIN1 (via SH3 domain) and SH3GL2 (via SH3 domain). Forms a complex with SH3GL2 (via SH3 domain) and AMPH (via SH3 domain). Forms a complex with SH3GL2 (via SH3 domain) and SYNJ1. Interacts (via C-terminal proline-rich domain (PRD)) with SYT1; this interaction facilitates vesicle fission during clathrin-mediated endocytosis (CME). Interacts (via C-terminal proline-rich domain (PRD)) with PLCG1 (via SH3 domain); this interaction stimulates the release of GDP from DNM1 and enhances DNM1-dependent endocytosis. Interacts with SNPH; this interaction inhibits the binding of DNM1 to AMPH and DNM1-receptor-mediated endocytosis. Interacts with CAV1. Interacts with SH3GLB1 (via SH3 domain). Interacts with PACSIN1 (via SH3 domain), PACSIN2 (via SH3 domain) and PACSIN3 (via SH3 domain). Interacts with UNC119; this interaction decreases DNM1's GTPase activity and affects DNM1's interaction with AMPH. Interacts with AMPH. Interacts (GTP-bound form) with DNAJC6; this interaction allows clathrin-coated vesicle (CCV) formation at the plasma membrane. Phosphorylation at Ser-774 by GSK3B/GSK3-beta leads to inactivation of receptor-mediated endocytosis in non-neuronal cells. Dephosphorylation at Ser-774, through the EGFR downstream signaling, leads to activation and regulates early stages of clathrin-mediated endocytosis (CME). Phosphorylated on Tyr in response to EGF stimulation in cells expressing truncated EGFR. Phosphorylated by CDK5 leading to synaptic vesicle endocytosis (SVE) activation. In terms of tissue distribution, expressed exclusively in the brain.

It is found in the cell membrane. The protein resides in the membrane. The protein localises to the clathrin-coated pit. It localises to the cytoplasmic vesicle. Its subcellular location is the presynapse. It is found in the secretory vesicle. The protein resides in the chromaffin granule. The enzyme catalyses GTP + H2O = GDP + phosphate + H(+). Catalyzes the hydrolysis of GTP and utilizes this energy to mediate vesicle scission and participates in many forms of endocytosis, such as clathrin-mediated endocytosis or synaptic vesicle endocytosis as well as rapid endocytosis (RE). Associates to the membrane, through lipid binding, and self-assembles into rings and stacks of interconnected rings through oligomerization to form a helical polymer around the vesicle membrane leading to constriction of invaginated coated pits around their necks. Self-assembly of the helical polymer induces membrane tubules narrowing until the polymer reaches a length sufficient to trigger GTP hydrolysis. Depending on the curvature imposed on the tubules, membrane detachment from the helical polymer upon GTP hydrolysis can cause spontaneous hemifission followed by complete fission. May play a role in regulating early stages of clathrin-mediated endocytosis in non-neuronal cells through its activation by dephosphorylation via the signaling downstream of EGFR. Controls vesicle size at a step before fission, during formation of membrane pits, at hippocampal synapses. Controls plastic adaptation of the synaptic vesicle recycling machinery to high levels of activity. Mediates rapid endocytosis (RE), a Ca(2+)-dependent and clathrin- and K(+)-independent process in chromaffin cells. Microtubule-associated force-producing protein involved in producing microtubule bundles and able to bind and hydrolyze GTP. Through its interaction with DNAJC6, acts during the early steps of clathrin-coated vesicle (CCV) formation. The polypeptide is Dynamin-1 (Mus musculus (Mouse)).